The primary structure comprises 369 residues: Septin-5 (369 aa).

Thr-13 is subject to Phosphothreonine. The 274-residue stretch at 41 to 314 folds into the Septin-type G domain; sequence KGFDFTLMVA…ENYRAHCIQQ (274 aa). The tract at residues 51-58 is G1 motif; it reads GESGLGKS. Residues 51 to 58, Thr-85, and Gly-111 each bind GTP; that span reads GESGLGKS. The segment at 108 to 111 is G3 motif; sequence DTPG. Position 168 is an omega-N-methylarginine (Arg-168). The G4 motif stretch occupies residues 189–192; it reads AKAD. 190 to 198 provides a ligand contact to GTP; it reads KADCLVPSE. Ser-225 is modified (phosphoserine). GTP contacts are provided by Gly-248 and Arg-263. Ser-327 is subject to Phosphoserine. Thr-336 carries the post-translational modification Phosphothreonine. Residues 338 to 369 adopt a coiled-coil conformation; sequence DAETEKLIRMKDEELRRMQEMLQRMKQQMQDQ.

Belongs to the TRAFAC class TrmE-Era-EngA-EngB-Septin-like GTPase superfamily. Septin GTPase family. In terms of assembly, septins polymerize into heterooligomeric protein complexes that form filaments, and can associate with cellular membranes, actin filaments and microtubules. GTPase activity is required for filament formation. Interacts with SEPTIN2 and SEPTIN5. In platelets, associated with a complex containing STX4. Interacts with PRKN; this interaction leads to SEPTIN5 ubiquitination and degradation. Interacts with DYRK1A. Interacts with STX1A; in the cerebellar cortex. Post-translationally, phosphorylated by DYRK1A. In platelets, phosphorylated in response to thrombin, phorbol-12-myristate-13-acetate and collagen. In terms of tissue distribution, expressed at high levels in the CNS, as well as in heart and platelets (at protein level).

The protein localises to the cytoplasm. The protein resides in the cytoskeleton. Filament-forming cytoskeletal GTPase. May play a role in cytokinesis (Potential). May play a role in platelet secretion. The protein is Septin-5 of Homo sapiens (Human).